A 244-amino-acid polypeptide reads, in one-letter code: Probable transcriptional regulatory protein BT0025 (244 aa).

The protein belongs to the TACO1 family.

Its subcellular location is the cytoplasm. In Borrelia turicatae (strain 91E135), this protein is Probable transcriptional regulatory protein BT0025.